The following is a 347-amino-acid chain: 3-isopropylmalate dehydrogenase (347 aa).

Position 76–87 (76–87 (GPKWTDPNNRPE)) interacts with NAD(+). R94, R104, R132, and D217 together coordinate substrate. The Mg(2+) site is built by D217, D241, and D245. An NAD(+)-binding site is contributed by 275-287 (GSAPDIANEDKAN).

This sequence belongs to the isocitrate and isopropylmalate dehydrogenases family. LeuB type 1 subfamily. In terms of assembly, homodimer. Mg(2+) serves as cofactor. The cofactor is Mn(2+).

It localises to the cytoplasm. It catalyses the reaction (2R,3S)-3-isopropylmalate + NAD(+) = 4-methyl-2-oxopentanoate + CO2 + NADH. The protein operates within amino-acid biosynthesis; L-leucine biosynthesis; L-leucine from 3-methyl-2-oxobutanoate: step 3/4. In terms of biological role, catalyzes the oxidation of 3-carboxy-2-hydroxy-4-methylpentanoate (3-isopropylmalate) to 3-carboxy-4-methyl-2-oxopentanoate. The product decarboxylates to 4-methyl-2 oxopentanoate. This is 3-isopropylmalate dehydrogenase from Staphylococcus epidermidis (strain ATCC 35984 / DSM 28319 / BCRC 17069 / CCUG 31568 / BM 3577 / RP62A).